A 315-amino-acid chain; its full sequence is Tetraacyldisaccharide 4'-kinase (315 aa).

Position 45-52 (45-52) interacts with ATP; the sequence is SVGGSGKT.

This sequence belongs to the LpxK family.

The catalysed reaction is a lipid A disaccharide + ATP = a lipid IVA + ADP + H(+). The protein operates within glycolipid biosynthesis; lipid IV(A) biosynthesis; lipid IV(A) from (3R)-3-hydroxytetradecanoyl-[acyl-carrier-protein] and UDP-N-acetyl-alpha-D-glucosamine: step 6/6. Its function is as follows. Transfers the gamma-phosphate of ATP to the 4'-position of a tetraacyldisaccharide 1-phosphate intermediate (termed DS-1-P) to form tetraacyldisaccharide 1,4'-bis-phosphate (lipid IVA). This Aquifex aeolicus (strain VF5) protein is Tetraacyldisaccharide 4'-kinase.